The sequence spans 280 residues: 2-C-methyl-D-erythritol 4-phosphate cytidylyltransferase (280 aa).

This sequence belongs to the IspD/TarI cytidylyltransferase family. IspD subfamily.

The catalysed reaction is 2-C-methyl-D-erythritol 4-phosphate + CTP + H(+) = 4-CDP-2-C-methyl-D-erythritol + diphosphate. It functions in the pathway isoprenoid biosynthesis; isopentenyl diphosphate biosynthesis via DXP pathway; isopentenyl diphosphate from 1-deoxy-D-xylulose 5-phosphate: step 2/6. Functionally, catalyzes the formation of 4-diphosphocytidyl-2-C-methyl-D-erythritol from CTP and 2-C-methyl-D-erythritol 4-phosphate (MEP). This Psychrobacter cryohalolentis (strain ATCC BAA-1226 / DSM 17306 / VKM B-2378 / K5) protein is 2-C-methyl-D-erythritol 4-phosphate cytidylyltransferase.